The chain runs to 282 residues: Acyl-CoA-binding domain-containing protein 6 (282 aa).

Residues Met1 to Pro31 form a disordered region. The 86-residue stretch at Leu42 to Pro127 folds into the ACB domain. An acyl-CoA-binding positions include Tyr69–Lys73 and Lys95. Position 106 is a phosphoserine (Ser106). An an acyl-CoA-binding site is contributed by Tyr114. ANK repeat units follow at residues Glu191–Cys220 and Glu224–Leu253.

In terms of assembly, monomer. As to expression, detected in placenta and spleen (at protein level). Detected in placenta, umbilical cord blood, CD34-positive hematopoietic progenitor cells and bone marrow.

Its subcellular location is the cytoplasm. It is found in the nucleus. Functionally, binds long-chain acyl-coenzyme A molecules with a strong preference for unsaturated C18:1-CoA, lower affinity for unsaturated C20:4-CoA, and very weak affinity for saturated C16:0-CoA. Does not bind fatty acids. Plays a role in protein N-myristoylation. This Homo sapiens (Human) protein is Acyl-CoA-binding domain-containing protein 6 (ACBD6).